Consider the following 493-residue polypeptide: Rho guanine nucleotide exchange factor 9 (493 aa).

The SH3 domain maps to 15-74; sequence DSIVSAEAVWDHVTMANRGVAFKAGDVIKVLDASNKDWWWGQIDDEEGWFPASFVRLWVN. The tract at residues 107–117 is interaction with GPHN; it reads RDQMRANVINE. The region spanning 110–294 is the DH domain; it reads MRANVINEIM…RNVTQQINER (185 aa). In terms of domain architecture, PH spans 325–432; that stretch reads ELIYTGEMAW…WLRAFREERK (108 aa). The interval 453 to 473 is disordered; sequence AMTVRKASKQKGRVGEEENQS.

Interacts with GPHN. In terms of tissue distribution, detected in brain, throughout the gray matter. Detected at low levels in heart and skeletal muscle.

The protein resides in the cytoplasm. It is found in the postsynaptic density. Its function is as follows. Acts as a guanine nucleotide exchange factor (GEF) for CDC42. Promotes formation of GPHN clusters. The chain is Rho guanine nucleotide exchange factor 9 (Arhgef9) from Rattus norvegicus (Rat).